The sequence spans 437 residues: Glucose-1-phosphate adenylyltransferase (437 aa).

Residues Tyr113, Gly179, 194-195 (EK), and Ser212 each bind alpha-D-glucose 1-phosphate.

This sequence belongs to the bacterial/plant glucose-1-phosphate adenylyltransferase family. As to quaternary structure, homotetramer.

It carries out the reaction alpha-D-glucose 1-phosphate + ATP + H(+) = ADP-alpha-D-glucose + diphosphate. It participates in glycan biosynthesis; glycogen biosynthesis. In terms of biological role, involved in the biosynthesis of ADP-glucose, a building block required for the elongation reactions to produce glycogen. Catalyzes the reaction between ATP and alpha-D-glucose 1-phosphate (G1P) to produce pyrophosphate and ADP-Glc. The chain is Glucose-1-phosphate adenylyltransferase from Haemophilus influenzae (strain 86-028NP).